The following is a 389-amino-acid chain: tRNA pseudouridine synthase Pus10 (389 aa).

D213 acts as the Nucleophile in catalysis. Y278 and Y350 together coordinate substrate.

It belongs to the pseudouridine synthase Pus10 family.

It catalyses the reaction uridine(54) in tRNA = pseudouridine(54) in tRNA. The enzyme catalyses uridine(55) in tRNA = pseudouridine(55) in tRNA. In terms of biological role, responsible for synthesis of pseudouridine from uracil-54 and uracil-55 in the psi GC loop of transfer RNAs. The protein is tRNA pseudouridine synthase Pus10 of Thermoplasma acidophilum (strain ATCC 25905 / DSM 1728 / JCM 9062 / NBRC 15155 / AMRC-C165).